A 1220-amino-acid chain; its full sequence is Plasma membrane calcium-transporting ATPase 1 (1220 aa).

The residue at position 2 (glycine 2) is an N-acetylglycine. Over 2–105 (GDMANNSVVY…KTFLQLVWEA (104 aa)) the chain is Cytoplasmic. Serine 8 and serine 17 each carry phosphoserine. The helical transmembrane segment at 106-126 (LQDVTLIILEIAAIVSLGLSF) threads the bilayer. The Extracellular portion of the chain corresponds to 127-154 (YQPPEGDNALCGEVSVGEEEGEGETGWI). The chain crosses the membrane as a helical span at residues 155–175 (EGAAILLSVVCVVLVTAFNDW). Residues 176–366 (SKEKQFRGLQ…KEKSVLQGKL (191 aa)) are Cytoplasmic-facing. Residues 297 to 356 (EEEKKDEKKKEKKNKKQDGAIENRNKAKAQDGEPMEMQPLKSEEGGDGDEKDKKKANLPK) form a disordered region. Basic and acidic residues-rich tracts occupy residues 312-327 (KQDG…KAQD) and 337-356 (KSEE…NLPK). Position 338 is a phosphoserine (serine 338). The chain crosses the membrane as a helical span at residues 367 to 386 (TKLAVQIGKAGLLMSAITVI). The Extracellular portion of the chain corresponds to 387-418 (ILVLYFLIDTFWVQKRPWLAECTPIYIQYFVK). The chain crosses the membrane as a helical span at residues 419–439 (FFIIGVTVLVVAVPEGLPLPV). Residues 440 to 855 (TISLAYSVNE…RNVYDSISKF (416 aa)) are Cytoplasmic-facing. The active-site 4-aspartylphosphate intermediate is aspartate 475. Mg(2+) contacts are provided by aspartate 475, threonine 477, and aspartate 797. Residues 856 to 876 (LQFQLTVNVVAVIVAFTGACI) traverse the membrane as a helical segment. The Extracellular portion of the chain corresponds to 877–882 (TQDSPL). A helical membrane pass occupies residues 883-903 (KAVQMLWVNLIMDTLASLALA). Topologically, residues 904 to 927 (TEPPTESLLLGKPYGRNKPLISRT) are cytoplasmic. The chain crosses the membrane as a helical span at residues 928–948 (MMKNILGHAFYQLVVVFTLLL). At 949–971 (AGEKFFDIDSGRNAPLHAPPSEH) the chain is on the extracellular side. Residues 972-991 (YTIVFNIFVLMQLFNEINAR) traverse the membrane as a helical segment. The Cytoplasmic portion of the chain corresponds to 992 to 1005 (KIHGERNVFEGIFN). A helical membrane pass occupies residues 1006-1027 (NAIFCTIVLGTFVVQIIIVQFA). Residues 1028–1039 (GKPFSCSELSVE) are Extracellular-facing. Residues 1040-1060 (QWLWSIFLGMGTLLWGQLIST) form a helical membrane-spanning segment. Topologically, residues 1061-1220 (IPTSRLKFQK…SPLHSLETSL (160 aa)) are cytoplasmic. Positions 1100–1117 (LRRWQILWFRGLNRIQTQ) are calmodulin-binding subdomain A. Threonine 1116 is modified (phosphothreonine; by PKC). A required for basolateral membrane targeting region spans residues 1118-1220 (IRVVNAFRSS…SPLHSLETSL (103 aa)). Serine 1140 and serine 1155 each carry phosphoserine. Residues 1160-1220 (PLIDDTDAED…SPLHSLETSL (61 aa)) are disordered. Threonine 1165 is subject to Phosphothreonine. The residue at position 1177 (serine 1177) is a Phosphoserine; by PKA. Residues serine 1178 and serine 1182 each carry the phosphoserine modification. The segment covering 1200–1220 (MNKSATSSSPGSPLHSLETSL) has biased composition (polar residues).

The protein belongs to the cation transport ATPase (P-type) (TC 3.A.3) family. Type IIB subfamily. As to quaternary structure, monomer. Dimer. Oligomer. Calmodulin binding. Interacts with PDZD11. Interacts with SLC35G1 and STIM1. Interacts with YWHAE; interacts with the monomeric and dimeric forms of the YWHAE but prefer the monomer form; this interaction inhibits calcium-transporting ATPase activity. Interacts with NPTN; this interaction stabilizes ATP2B1 and increases ATPase activity; this interaction controls T cell calcium homeostasis following T cell activation. Interacts with EPB41; regulates small intestinal calcium absorption through regulation of membrane expression of ATP2B1. As to expression, isoform B is ubiquitously expressed and is the most predominant isoform. Isoform C is expressed at much lower levels in all tissues tested, but liver, while isoform A is found only in aorta, brain and stomach.

Its subcellular location is the cell membrane. The protein localises to the basolateral cell membrane. The protein resides in the synapse. It is found in the presynaptic cell membrane. It localises to the cytoplasmic vesicle. Its subcellular location is the secretory vesicle. The protein localises to the synaptic vesicle membrane. It catalyses the reaction Ca(2+)(in) + ATP + H2O = Ca(2+)(out) + ADP + phosphate + H(+). Functionally, catalyzes the hydrolysis of ATP coupled with the transport of calcium from the cytoplasm to the extracellular space thereby maintaining intracellular calcium homeostasis. Plays a role in blood pressure regulation through regulation of intracellular calcium concentration and nitric oxide production leading to regulation of vascular smooth muscle cells vasoconstriction. Positively regulates bone mineralization through absorption of calcium from the intestine. Plays dual roles in osteoclast differentiation and survival by regulating RANKL-induced calcium oscillations in preosteoclasts and mediating calcium extrusion in mature osteoclasts. Regulates insulin sensitivity through calcium/calmodulin signaling pathway by regulating AKT1 activation and NOS3 activation in endothelial cells. May play a role in synaptic transmission by modulating calcium and proton dynamics at the synaptic vesicles. In Oryctolagus cuniculus (Rabbit), this protein is Plasma membrane calcium-transporting ATPase 1.